A 247-amino-acid chain; its full sequence is Probable proteasome subunit alpha type-5 (247 aa).

The residue at position 55 (Thr-55) is a Phosphothreonine.

Belongs to the peptidase T1A family. The 26S proteasome consists of a 20S proteasome core and two 19S regulatory subunits. The 20S proteasome core is composed of 28 subunits that are arranged in four stacked rings, resulting in a barrel-shaped structure. The two end rings are each formed by seven alpha subunits, and the two central rings are each formed by seven beta subunits. The catalytic chamber with the active sites is on the inside of the barrel.

It is found in the cytoplasm. It localises to the nucleus. In terms of biological role, the proteasome is a multicatalytic proteinase complex which is characterized by its ability to cleave peptides with Arg, Phe, Tyr, Leu, and Glu adjacent to the leaving group at neutral or slightly basic pH. The proteasome has an ATP-dependent proteolytic activity. In Schizosaccharomyces pombe (strain 972 / ATCC 24843) (Fission yeast), this protein is Probable proteasome subunit alpha type-5 (pup2).